Reading from the N-terminus, the 43-residue chain is MESTLSLVVAIAAITICITAFAIYTAFGPPSKNLQDPYEMHED.

The helical transmembrane segment at 7 to 27 (LVVAIAAITICITAFAIYTAF) threads the bilayer.

Belongs to the PsbN family.

It localises to the cellular thylakoid membrane. Functionally, may play a role in photosystem I and II biogenesis. This is Protein PsbN from Synechococcus sp. (strain JA-3-3Ab) (Cyanobacteria bacterium Yellowstone A-Prime).